The primary structure comprises 425 residues: MSADLAQLVTLIAQRARAASLTLATTSTAAKNSALLRLADLIAGSTLPLLNANQLDIAAAKKHGLTQAQIDRLTLTPIRLTQLADSVRHVATLPDPVGEVLEETTRPNGLVLRRVRVPIGVIGIIYEARPNVTIDCAALCLKSGNAAILRGGKESFHTNTALAALIAQALSAAELPADAVQLIPTTERAALTHLLTLDSLVHCIIPRGGESLIRFVAEHSTIPVIKHYKGVCFVYVDREAHLKMAEQIVVNAKTSRPGVCNAAEQLLVHRGVATKFLPAIARALNAAHPVELRCDAESAAILAQENLPHVAASDADFSTEFLDYILAVRVVDSIDTAIATINRDSSNHSDAIVTNDTSAANRFLAGVDSAAVFWNASTRFNDGVEFGLGAEIGISTDRLHARGPMGLRELCSYKWLVSGIGQVRS.

It belongs to the gamma-glutamyl phosphate reductase family.

The protein localises to the cytoplasm. The catalysed reaction is L-glutamate 5-semialdehyde + phosphate + NADP(+) = L-glutamyl 5-phosphate + NADPH + H(+). It functions in the pathway amino-acid biosynthesis; L-proline biosynthesis; L-glutamate 5-semialdehyde from L-glutamate: step 2/2. Catalyzes the NADPH-dependent reduction of L-glutamate 5-phosphate into L-glutamate 5-semialdehyde and phosphate. The product spontaneously undergoes cyclization to form 1-pyrroline-5-carboxylate. This is Gamma-glutamyl phosphate reductase from Opitutus terrae (strain DSM 11246 / JCM 15787 / PB90-1).